A 523-amino-acid polypeptide reads, in one-letter code: Melanoma-associated antigen E2 (523 aa).

2 consecutive MAGE domains span residues L88–A288 and M311–A502.

This is Melanoma-associated antigen E2 (MAGEE2) from Homo sapiens (Human).